Here is a 275-residue protein sequence, read N- to C-terminus: Large ribosomal subunit protein uL2 (275 aa).

Positions 221-275 (RGSAMTPRDHPHGGGEGKAPRGMPPKTPWGKPALGKRTRRNKKSDRFIIRRRYEA) are disordered. The span at 227-239 (PRDHPHGGGEGKA) shows a compositional bias: basic and acidic residues. Basic residues predominate over residues 254-263 (LGKRTRRNKK). Over residues 264–275 (SDRFIIRRRYEA) the composition is skewed to basic and acidic residues.

This sequence belongs to the universal ribosomal protein uL2 family. In terms of assembly, part of the 50S ribosomal subunit. Forms a bridge to the 30S subunit in the 70S ribosome.

Its function is as follows. One of the primary rRNA binding proteins. Required for association of the 30S and 50S subunits to form the 70S ribosome, for tRNA binding and peptide bond formation. It has been suggested to have peptidyltransferase activity; this is somewhat controversial. Makes several contacts with the 16S rRNA in the 70S ribosome. The chain is Large ribosomal subunit protein uL2 from Thermomicrobium roseum (strain ATCC 27502 / DSM 5159 / P-2).